We begin with the raw amino-acid sequence, 311 residues long: Cytosolic Fe-S cluster assembly factor Nubp1 homolog (311 aa).

Residues Cys-9, Cys-23, Cys-26, and Cys-32 each contribute to the [4Fe-4S] cluster site. 63–70 (GKGGVGKS) is a binding site for ATP. [4Fe-4S] cluster is bound by residues Cys-240 and Cys-243.

Belongs to the Mrp/NBP35 ATP-binding proteins family. NUBP1/NBP35 subfamily. In terms of assembly, heterotetramer of 2 Nubp1 and 2 Nubp2 chains. The cofactor is [4Fe-4S] cluster.

The protein localises to the cytoplasm. Its function is as follows. Component of the cytosolic iron-sulfur (Fe/S) protein assembly (CIA) machinery. Required for maturation of extramitochondrial Fe-S proteins. The Nubp1-Nubp2 heterotetramer forms a Fe-S scaffold complex, mediating the de novo assembly of an Fe-S cluster and its transfer to target apoproteins. This Drosophila erecta (Fruit fly) protein is Cytosolic Fe-S cluster assembly factor Nubp1 homolog.